A 229-amino-acid chain; its full sequence is Transcriptional regulatory protein YxdJ (229 aa).

Residues 3-116 (KIMIVEDSED…IVLAKIKSQI (114 aa)) form the Response regulatory domain. Asp52 carries the post-translational modification 4-aspartylphosphate. The ompR/PhoB-type DNA-binding region spans 129-227 (EKVVEYAGVQ…VRGEGYQLRA (99 aa)).

Phosphorylated by YxdK.

It is found in the cytoplasm. Probable member of the two-component regulatory system YxdK/YxdJ. Positively regulates the expression of the yxdLMyxeA operon by direct interaction with its promoter region. Could also indirectly regulate the expression of the dlt operon. This is Transcriptional regulatory protein YxdJ (yxdJ) from Bacillus subtilis (strain 168).